Here is a 559-residue protein sequence, read N- to C-terminus: Podocan-like protein 1 (559 aa).

The signal sequence occupies residues 1-20; that stretch reads MRPQELLLLLLMLKWSLAHT. Asn64 carries N-linked (GlcNAc...) asparagine glycosylation. LRR repeat units lie at residues 66–89, 90–115, 117–139, 140–160, 161–186, 188–208, 209–231, 233–257, 258–281, 283–302, 303–328, 329–352, 354–373, 374–399, 400–423, 425–444, 445–470, 471–494, 496–515, and 517–541; these read TRAA…ELSR, LSGL…AFES, NQLE…LPRS, LRVA…TFGE, KPAL…TFHG, EVIT…PSLP, ASLE…ALSL, THLR…TFSK, LSSL…LPGT, TILH…RLHK, ARGL…TLRP, LRAL…LPRH, QALV…DLVS, ARAL…AFRR, LRAL…LPAS, RSLR…QLAG, LNKL…TWHE, LQAL…LPEA, EELY…AFLS, and PHLR…ALQG.

Belongs to the small leucine-rich proteoglycan (SLRP) family. SLRP class V subfamily. Post-translationally, N-glycosylated. Detected in bone where it is expressed in osteoblasts and newly formed bone matrix (at protein level). Also expressed weakly in osteoclasts (at protein level). Expressed strongly in calvaria, lung and femur, and weakly in kidney.

The protein localises to the secreted. It localises to the extracellular space. Its subcellular location is the extracellular matrix. The polypeptide is Podocan-like protein 1 (Mus musculus (Mouse)).